An 856-amino-acid chain; its full sequence is MREAYLRCWIFSWKNVWVRPCQRLHFKTVLLQGSLLYTALDSYSTVQAAPKSSSGSVKFQGLAETGIMKMDMEDADMTLWTEAEFEEKCTYIVNDHPWDSGADGGTSVQAEASLPRNLLFKYAANNSKEVIGVVSKEYIPKGTRFGPLIGEVYTNDTVPKNANRKYFWRIYSREEFHHFIDGFNEEKSNWMRYVNPAHSAREQNLAACQNGMNIYFYTIKPIPANQELLVWYCRDFAERLHYPYPGELTVINLTQTESNPKQYSSEKNELYPKSVPKREYSVKEILKLDSNPSKRKDIYRSNISPFTLEKDMDGFRKNGSPDMPFYPRVVYPIRAPLPEDFLKASLAYGMERPTYITHSPLPSSTTPSPPASSSPEQSLKSSSPHSSPGNTVSPLAPGLPEHRDSYSYLNVSYGSEGLGSYPGYAPAPHLPPAFIPSYNAHYPKFLLPPYGISSNGLSTMNNINGINNFSLFPRLYPVYSNLLSGSSLPHPMLNPASLPSSLPTDGARRLLPPEHPKEVLIPAPHSAFSLTGAAASMKDESSPPSGSPTAGTAATSEHVVQPKATSSVMAAPSTDGAMNLIKNKRNMTGYKTLPYPLKKQNGKIKYECNVCAKTFGQLSNLKVHLRVHSGERPFKCQTCNKGFTQLAHLQKHYLVHTGEKPHECQVCHKRFSSTSNLKTHLRLHSGEKPYQCKVCPAKFTQFVHLKLHKRLHTRERPHKCAQCHKSYIHLCSLKVHLKGNCPAGPAAGLPLEDLTRINEEIERFDISDNADRLEDMEDSVDVTSMVEKEILAVVRKEKEETSLKVSLQRNMGNGLLSSGCSLYESSDLSLMKLPHSNPLPLVPVKVKQETVEPMDP.

The 119-residue stretch at 115–233 folds into the SET domain; the sequence is PRNLLFKYAA…ANQELLVWYC (119 aa). Disordered regions lie at residues 357–399 and 532–571; these read THSP…APGL and GAAA…VMAA. Composition is skewed to low complexity over residues 373–393 and 542–556; these read SSPE…NTVS and SPPS…AATS. Positions 558–605 are interaction with PIAS1; sequence HVVQPKATSSVMAAPSTDGAMNLIKNKRNMTGYKTLPYPLKKQNGKIK. C2H2-type zinc fingers lie at residues 606–628, 634–656, 662–684, and 690–712; these read YECN…LRVH, FKCQ…YLVH, HECQ…LRLH, and YQCK…KRLH. Lysine 847 participates in a covalent cross-link: Glycyl lysine isopeptide (Lys-Gly) (interchain with G-Cter in SUMO1); alternate. Lysine 847 is covalently cross-linked (Glycyl lysine isopeptide (Lys-Gly) (interchain with G-Cter in SUMO2); alternate).

It belongs to the class V-like SAM-binding methyltransferase superfamily. As to quaternary structure, interacts with PRMT5. Interacts with FBXO10. Interacts with FBXO11. Interacts with multiple nuclear sumoylation E3 ligases, including CBX4, PIAS1, PIAS2, PIAS3, PIAS4, PML and RNF4, but not RANBP2. Interacts with LDB1, SMARCD3 and SMARCC1. Interacts with EEIG1; following TNFSF11/RANKL stimulation in bone marrow-derived macrophages, the interaction promotes the binding of PRDM1/BLIMP1 to the gene promoter of IRF8. Post-translationally, sumoylation at Lys-847 by PIAS1 increases transcriptional repressor activity, and is critical for plasma cell differentiation. Can be sumoylated with SUMO1 and SUMO2 by PML. Degradation of the wild-type protein mostly depends upon sumoylation, rather than ubiquitination. Desumoylated by SENP1 and SENP6. Ubiquitinated by SCF(FBXO11), leading to its degradation by the proteasome. Expressed in bone marrow macrophages (at protein level). Expressed in innate lymphocytes, including tissue-resident conventional natural killer (cNK) cells in liver. Expressed also weakly in tissue-resident natural killer (trNK) and natural killer T (NKT) cells in liver. As to expression, expressed in bone marrow, spleen and lymph node but not in brain, heart, kidney, liver, ovary or muscle. Weak expression detected in the lung. In terms of tissue distribution, expressed only in the yolk sac. Expressed in embryo, yolk sac, placenta, splenocytes, and activated T-cells.

The protein localises to the nucleus. The protein resides in the cytoplasm. Functionally, transcription factor that mediates a transcriptional program in various innate and adaptive immune tissue-resident lymphocyte T cell types such as tissue-resident memory T (Trm), natural killer (trNK) and natural killer T (NKT) cells and negatively regulates gene expression of proteins that promote the egress of tissue-resident T-cell populations from non-lymphoid organs. Plays a role in the development, retention and long-term establishment of adaptive and innate tissue-resident lymphocyte T cell types in non-lymphoid organs, such as the skin and gut, but also in other nonbarrier tissues like liver and kidney, and therefore may provide immediate immunological protection against reactivating infections or viral reinfection. Binds specifically to the PRDI element in the promoter of the beta-interferon gene. Drives the maturation of B-lymphocytes into Ig secreting cells. Associates with the transcriptional repressor ZNF683 to chromatin at gene promoter regions. Binds to the promoter and acts as a transcriptional repressor of IRF8, thereby promotes transcription of osteoclast differentiation factors such as NFATC1 and EEIG1. The chain is PR domain zinc finger protein 1 (Prdm1) from Mus musculus (Mouse).